A 1364-amino-acid polypeptide reads, in one-letter code: Formin-like protein 6 (1364 aa).

The region spanning 9–193 (YRKPPDGLLE…HYISRRNVSA (185 aa)) is the Phosphatase tensin-type domain. The Phosphocysteine intermediate role is filled by Cys126. In terms of domain architecture, C2 tensin-type spans 199–338 (DRALTLDCVI…FRAEVLFSEM (140 aa)). 3 disordered regions span residues 614 to 934 (KCTP…NLKP), 976 to 999 (VLPS…KPEK), and 1317 to 1364 (EAEA…ASAK). Over residues 617–631 (PSPPPLLPPLAPVVP) the composition is skewed to pro residues. The span at 657–690 (SFPSLSPTQQKQSTSKLCQTILPTNHQLSSSNIT) shows a compositional bias: polar residues. Positions 734 to 743 (PPAPPPPPLQ) are enriched in pro residues. The span at 744 to 757 (SPSTPRCSPVRTLA) shows a compositional bias: low complexity. Composition is skewed to pro residues over residues 774 to 813 (GPPP…PAAP) and 856 to 865 (PSPPPPPPPC). Over residues 916–929 (MSRSLQSGQAASRR) the composition is skewed to polar residues. The region spanning 922–1322 (SGQAASRRSN…KALKEAEAEK (401 aa)) is the FH2 domain. Residues 1317-1351 (EAEAEKTKKEPENAQKTKEPGNDKAKHNNSIKELD) show a composition bias toward basic and acidic residues. Polar residues predominate over residues 1353 to 1364 (SLQSPAQTASAK).

Belongs to the formin-like family. Class-II subfamily.

In Oryza sativa subsp. japonica (Rice), this protein is Formin-like protein 6 (FH6).